Here is a 261-residue protein sequence, read N- to C-terminus: Phosphonates import ATP-binding protein PhnC (261 aa).

An ABC transporter domain is found at 15-257 (LCLENTSAVY…LERSAIPPKR (243 aa)). 48 to 55 (GPSGSGKS) is an ATP binding site.

This sequence belongs to the ABC transporter superfamily. Phosphonates importer (TC 3.A.1.9.1) family. As to quaternary structure, the complex is composed of two ATP-binding proteins (PhnC), two transmembrane proteins (PhnE) and a solute-binding protein (PhnD).

Its subcellular location is the cell inner membrane. It carries out the reaction phosphonate(out) + ATP + H2O = phosphonate(in) + ADP + phosphate + H(+). Its function is as follows. Part of the ABC transporter complex PhnCDE involved in phosphonates import. Responsible for energy coupling to the transport system. The protein is Phosphonates import ATP-binding protein PhnC of Hyphomonas neptunium (strain ATCC 15444).